A 317-amino-acid polypeptide reads, in one-letter code: Ceramide reductase (317 aa).

The N-terminal stretch at Met1–Ala27 is a signal peptide.

The protein belongs to the NAD(P)-dependent epimerase/dehydratase family.

It localises to the periplasm. The catalysed reaction is N-acyl-3-oxosphinganine + NADH + H(+) = an N-acylsphinganine + NAD(+). It functions in the pathway lipid metabolism; sphingolipid metabolism. Functionally, involved in de novo bacterial ceramide synthesis. Catalyzes the reduction of bacterial oxidized ceramides to bacterial dihydroceramides. This Caulobacter vibrioides (strain NA1000 / CB15N) (Caulobacter crescentus) protein is Ceramide reductase.